The sequence spans 323 residues: Glucokinase (323 aa).

8–13 (GDVGGT) provides a ligand contact to ATP.

It belongs to the bacterial glucokinase family.

The protein localises to the cytoplasm. The catalysed reaction is D-glucose + ATP = D-glucose 6-phosphate + ADP + H(+). The polypeptide is Glucokinase (Yersinia enterocolitica serotype O:8 / biotype 1B (strain NCTC 13174 / 8081)).